A 335-amino-acid chain; its full sequence is Protease HtpX homolog (335 aa).

3 consecutive transmembrane segments (helical) span residues 9 to 29, 42 to 62, and 64 to 84; these read VYMM…STIA, LFTS…AIIY, and ILAY…LLII. His168 lines the Zn(2+) pocket. The active site involves Glu169. A Zn(2+)-binding site is contributed by His172. The next 2 membrane-spanning stretches (helical) occupy residues 179–199 and 213–233; these read AVML…YALL and AAIG…VLAF. Glu238 provides a ligand contact to Zn(2+).

The protein belongs to the peptidase M48B family. Requires Zn(2+) as cofactor.

It is found in the cell membrane. This is Protease HtpX homolog from Archaeoglobus fulgidus (strain ATCC 49558 / DSM 4304 / JCM 9628 / NBRC 100126 / VC-16).